The primary structure comprises 1755 residues: Transposon TyH3 Gag-Pol polyprotein (1755 aa).

Polar residues-rich tracts occupy residues 1–23 (MESQQLSQHSPNSHGSACASVTS), 48–60 (TKANSQQTTTPAS), and 127–152 (QSQFPQYPSSVGTPLSTPSPESGNTF). 3 disordered regions span residues 1 to 93 (MESQ…MMTQ), 126 to 173 (PQSQ…RPPP), and 352 to 421 (GSRN…SKST). The segment covering 153–165 (TDSSSADSDMTST) has biased composition (low complexity). Residues 299-401 (NNGIHINNKV…NSKSKTARAH (103 aa)) form an RNA-binding region. Over residues 402–418 (NVSTSNNSPSTDNDSIS) the composition is skewed to low complexity. A Phosphoserine modification is found at serine 416. The For protease activity; shared with dimeric partner role is filled by aspartate 461. The segment at 583–640 (NVHTSESTRKYPYPFIHRMLAHANAQTIRYSLKNNTITYFNESDVDWSSAIDYQCPDC) is integrase-type zinc finger-like. An Integrase catalytic domain is found at 660–835 (NSYEPFQYLH…AGLDISTLLP (176 aa)). Residues aspartate 671 and aspartate 736 each contribute to the Mg(2+) site. Disordered stretches follow at residues 956 to 1087 (SKAV…ETEK), 1092 to 1111 (RSPSIDASPPENNSSHNIVP), and 1130 to 1187 (DLPL…DNET). Over residues 960–969 (SPTDSTPPST) the composition is skewed to low complexity. Over residues 1005-1015 (STPQISNIEST) the composition is skewed to polar residues. A compositionally biased stretch (basic and acidic residues) spans 1038-1053 (ESSHASKSKDFRHSDS). 2 stretches are compositionally biased toward polar residues: residues 1054–1082 (YSENETNHTNVPISSTGGTNNKTVPQISD) and 1101–1111 (PENNSSHNIVP). The Bipartite nuclear localization signal motif lies at 1178–1212 (KKRSLEDNETEIKVSRDTWNTKNMRSLEPPRSKKR). The Reverse transcriptase Ty1/copia-type domain maps to 1338 to 1476 (NNYYITQLDI…DILGLEIKYQ (139 aa)). Mg(2+)-binding residues include aspartate 1346, aspartate 1427, aspartate 1428, aspartate 1610, glutamate 1652, and aspartate 1685. The RNase H Ty1/copia-type domain maps to 1610–1752 (DASYGNQPYY…IKTFKLLTNK (143 aa)).

In terms of assembly, the capsid protein forms a homotrimer, from which the VLPs are assembled. The protease is a homodimer, whose active site consists of two apposed aspartic acid residues. Initially, virus-like particles (VLPs) are composed of the structural unprocessed proteins Gag and Gag-Pol, and also contain the host initiator methionine tRNA (tRNA(i)-Met) which serves as a primer for minus-strand DNA synthesis, and a dimer of genomic Ty RNA. Processing of the polyproteins occurs within the particle and proceeds by an ordered pathway, called maturation. First, the protease (PR) is released by autocatalytic cleavage of the Gag-Pol polyprotein yielding capsid protein p45 and a Pol-p154 precursor protein. This cleavage is a prerequisite for subsequent processing of Pol-p154 at the remaining sites to release the mature structural and catalytic proteins. Maturation takes place prior to the RT reaction and is required to produce transposition-competent VLPs.

The protein resides in the cytoplasm. It localises to the nucleus. The catalysed reaction is DNA(n) + a 2'-deoxyribonucleoside 5'-triphosphate = DNA(n+1) + diphosphate. The enzyme catalyses Endonucleolytic cleavage to 5'-phosphomonoester.. In terms of biological role, capsid protein (CA) is the structural component of the virus-like particle (VLP), forming the shell that encapsulates the retrotransposons dimeric RNA genome. The particles are assembled from trimer-clustered units and there are holes in the capsid shells that allow for the diffusion of macromolecules. CA also has nucleocapsid-like chaperone activity, promoting primer tRNA(i)-Met annealing to the multipartite primer-binding site (PBS), dimerization of Ty1 RNA and initiation of reverse transcription. Functionally, the aspartyl protease (PR) mediates the proteolytic cleavages of the Gag and Gag-Pol polyproteins after assembly of the VLP. Its function is as follows. Reverse transcriptase/ribonuclease H (RT) is a multifunctional enzyme that catalyzes the conversion of the retro-elements RNA genome into dsDNA within the VLP. The enzyme displays a DNA polymerase activity that can copy either DNA or RNA templates, and a ribonuclease H (RNase H) activity that cleaves the RNA strand of RNA-DNA heteroduplexes during plus-strand synthesis and hydrolyzes RNA primers. The conversion leads to a linear dsDNA copy of the retrotransposon that includes long terminal repeats (LTRs) at both ends. Integrase (IN) targets the VLP to the nucleus, where a subparticle preintegration complex (PIC) containing at least integrase and the newly synthesized dsDNA copy of the retrotransposon must transit the nuclear membrane. Once in the nucleus, integrase performs the integration of the dsDNA into the host genome. This chain is Transposon TyH3 Gag-Pol polyprotein (TY1B), found in Saccharomyces cerevisiae (Baker's yeast).